The primary structure comprises 995 residues: Meckelin (995 aa).

A signal peptide spans 1 to 36; the sequence is MATRGGAGVAMAVWSLLSARAVTAFLLLFLPRFLQA. The interval 37–280 is cysteine-rich; the sequence is QTFSFPFQQP…FQFIFENTAG (244 aa). Residues 37 to 519 lie on the Extracellular side of the membrane; the sequence is QTFSFPFQQP…SVTYEMDHGE (483 aa). Cystine bridges form between Cys-49–Cys-62, Cys-65–Cys-78, Cys-80–Cys-97, Cys-100–Cys-114, Cys-117–Cys-127, Cys-129–Cys-150, Cys-153–Cys-170, Cys-173–Cys-184, Cys-186–Cys-197, Cys-237–Cys-246, and Cys-253–Cys-268. An N-linked (GlcNAc...) asparagine glycan is attached at Asn-141. N-linked (GlcNAc...) asparagine glycosylation occurs at Asn-179. Asn-242 carries an N-linked (GlcNAc...) asparagine glycan. Asn-318 is a glycosylation site (N-linked (GlcNAc...) asparagine). A disulfide bridge connects residues Cys-357 and Cys-378. A helical membrane pass occupies residues 520–548; that stretch reads AHVQTDIALGVLGGLAVLASLLKTAGWKR. The Cytoplasmic portion of the chain corresponds to 549–558; the sequence is RIGSPMIDLQ. Residues 559 to 590 traverse the membrane as a helical segment; that stretch reads TVVKFLVYYAGDLANVFFIITVGTGLYWLIFF. Residues 591–603 are Extracellular-facing; that stretch reads KAQKSVSVLLPMP. The helical transmembrane segment at 604–631 threads the bilayer; it reads IQEERFVTYVGCAFALKALQFLHKLISQ. Topologically, residues 632-670 are cytoplasmic; the sequence is ITIDVFFIDWERPKGKVLKAVEGEGGVRSATVPVSIWRT. Residues 671 to 679 constitute an intramembrane region (helical); sequence YFVANEWNE. Residues 671 to 701 form a discontinuously helical membrane-spanning segment; it reads YFVANEWNEIQTVRKINSLFQVLTVLFFLEV. The stretch at 680-688 is an intramembrane region; it reads IQTVRKINS. The segment at residues 689–701 is an intramembrane region (helical); sequence LFQVLTVLFFLEV. At 702 to 731 the chain is on the extracellular side; it reads VGFKNLALMDSSSSLSRNPPSYIAPYSCIL. Residues 732–757 constitute an intramembrane region (helical); the sequence is RYAVSAALWLAIGIIQVVFFAVFYER. Residues 732-771 traverse the membrane as a discontinuously helical segment; the sequence is RYAVSAALWLAIGIIQVVFFAVFYERFIEDKIRQFVDLCS. An intramembrane segment occupies 758-762; the sequence is FIEDK. Residues 763-771 constitute an intramembrane region (helical); that stretch reads IRQFVDLCS. Residues 772–926 are Cytoplasmic-facing; it reads MSNISVFLLS…SIFYNDEGYS (155 aa). A coiled-coil region spans residues 828–917; that stretch reads GQTFEIAISN…MEFMEPMEKS (90 aa). The segment at residues 927–929 is an intramembrane region (helical); the sequence is FSS. The chain crosses the membrane as a discontinuously helical span at residues 927–952; sequence FSSVLYYGNEATLLIFDLLFFCVVDL. The stretch at 930–936 is an intramembrane region; the sequence is VLYYGNE. An intramembrane region (helical) is located at residues 937–952; sequence ATLLIFDLLFFCVVDL. At 953–957 the chain is on the extracellular side; the sequence is ACQNF. A helical transmembrane segment spans residues 958–985; the sequence is ILASFLTYLQQEIFRYIRNTVGQKNLAS. The Cytoplasmic segment spans residues 986-995; sequence KTLVDQRFLI.

Homodimer. Part of the tectonic-like complex (also named B9 complex). Interacts with DNAJB9, DNAJC10 and mutated SFTPC. Interacts with SYNE2 during the early establishment of cell polarity. Interacts (via C-terminus) with FLNA. Interacts with TMEM218. Interacts with WNT5A. Interacts with ROR2. As to expression, widely expressed in adult and fetal tissues. Expressed at higher level in spinal cord.

The protein resides in the cell membrane. The protein localises to the endoplasmic reticulum membrane. Its subcellular location is the cell projection. It localises to the cilium. It is found in the cytoplasm. The protein resides in the cytoskeleton. The protein localises to the cilium basal body. Required for ciliary structure and function. Part of the tectonic-like complex which is required for tissue-specific ciliogenesis and may regulate ciliary membrane composition. Involved in centrosome migration to the apical cell surface during early ciliogenesis. Involved in the regulation of cilia length and appropriate number through the control of centrosome duplication. Is a key regulator of stereociliary bundle orientation. Required for epithelial cell branching morphology. Essential for endoplasmic reticulum-associated degradation (ERAD) of surfactant protein C (SFTPC). Involved in the negative regulation of canonical Wnt signaling, and activation of the non-canonical cascade stimulated by WNT5A. In non-canonical Wnt signaling, it may act as ROR2 coreceptor. The polypeptide is Meckelin (TMEM67) (Homo sapiens (Human)).